The primary structure comprises 95 residues: Pyrimidine/purine nucleoside phosphorylase (95 aa).

It belongs to the nucleoside phosphorylase PpnP family.

It carries out the reaction a purine D-ribonucleoside + phosphate = a purine nucleobase + alpha-D-ribose 1-phosphate. The enzyme catalyses adenosine + phosphate = alpha-D-ribose 1-phosphate + adenine. It catalyses the reaction cytidine + phosphate = cytosine + alpha-D-ribose 1-phosphate. The catalysed reaction is guanosine + phosphate = alpha-D-ribose 1-phosphate + guanine. It carries out the reaction inosine + phosphate = alpha-D-ribose 1-phosphate + hypoxanthine. The enzyme catalyses thymidine + phosphate = 2-deoxy-alpha-D-ribose 1-phosphate + thymine. It catalyses the reaction uridine + phosphate = alpha-D-ribose 1-phosphate + uracil. The catalysed reaction is xanthosine + phosphate = alpha-D-ribose 1-phosphate + xanthine. Its function is as follows. Catalyzes the phosphorolysis of diverse nucleosides, yielding D-ribose 1-phosphate and the respective free bases. Can use uridine, adenosine, guanosine, cytidine, thymidine, inosine and xanthosine as substrates. Also catalyzes the reverse reactions. This chain is Pyrimidine/purine nucleoside phosphorylase, found in Yersinia enterocolitica serotype O:8 / biotype 1B (strain NCTC 13174 / 8081).